Consider the following 94-residue polypeptide: Small ribosomal subunit protein uS19 (94 aa).

The protein belongs to the universal ribosomal protein uS19 family.

In terms of biological role, protein S19 forms a complex with S13 that binds strongly to the 16S ribosomal RNA. The chain is Small ribosomal subunit protein uS19 from Pelotomaculum thermopropionicum (strain DSM 13744 / JCM 10971 / SI).